The primary structure comprises 315 residues: Methionyl-tRNA formyltransferase (315 aa).

113-116 contacts (6S)-5,6,7,8-tetrahydrofolate; the sequence is SLLP.

The protein belongs to the Fmt family.

It carries out the reaction L-methionyl-tRNA(fMet) + (6R)-10-formyltetrahydrofolate = N-formyl-L-methionyl-tRNA(fMet) + (6S)-5,6,7,8-tetrahydrofolate + H(+). Its function is as follows. Attaches a formyl group to the free amino group of methionyl-tRNA(fMet). The formyl group appears to play a dual role in the initiator identity of N-formylmethionyl-tRNA by promoting its recognition by IF2 and preventing the misappropriation of this tRNA by the elongation apparatus. This is Methionyl-tRNA formyltransferase from Escherichia coli O139:H28 (strain E24377A / ETEC).